The following is a 219-amino-acid chain: Small ribosomal subunit protein uS4 (219 aa).

Positions 112–174 (RRLQTQVLRL…GSSPLMSESH (63 aa)) constitute an S4 RNA-binding domain. Residues 193–219 (KAAAEAKQARERPPERGGGRKKRGGRR) are disordered. Residues 199-210 (KQARERPPERGG) show a composition bias toward basic and acidic residues.

Belongs to the universal ribosomal protein uS4 family. As to quaternary structure, part of the 30S ribosomal subunit. Contacts protein S5. The interaction surface between S4 and S5 is involved in control of translational fidelity.

In terms of biological role, one of the primary rRNA binding proteins, it binds directly to 16S rRNA where it nucleates assembly of the body of the 30S subunit. Its function is as follows. With S5 and S12 plays an important role in translational accuracy. This is Small ribosomal subunit protein uS4 from Methanosarcina mazei (strain ATCC BAA-159 / DSM 3647 / Goe1 / Go1 / JCM 11833 / OCM 88) (Methanosarcina frisia).